Consider the following 406-residue polypeptide: Tryptophan synthase beta chain (406 aa).

Lysine 99 is subject to N6-(pyridoxal phosphate)lysine.

It belongs to the TrpB family. Tetramer of two alpha and two beta chains. Pyridoxal 5'-phosphate is required as a cofactor.

It catalyses the reaction (1S,2R)-1-C-(indol-3-yl)glycerol 3-phosphate + L-serine = D-glyceraldehyde 3-phosphate + L-tryptophan + H2O. Its pathway is amino-acid biosynthesis; L-tryptophan biosynthesis; L-tryptophan from chorismate: step 5/5. In terms of biological role, the beta subunit is responsible for the synthesis of L-tryptophan from indole and L-serine. This is Tryptophan synthase beta chain (trpB) from Caulobacter vibrioides (strain ATCC 19089 / CIP 103742 / CB 15) (Caulobacter crescentus).